The chain runs to 89 residues: UPF0175 protein ssl1255 (89 aa).

The protein belongs to the UPF0175 family.

In Synechocystis sp. (strain ATCC 27184 / PCC 6803 / Kazusa), this protein is UPF0175 protein ssl1255.